A 235-amino-acid chain; its full sequence is Lipoprotein-releasing system ATP-binding protein LolD (235 aa).

The region spanning 5–235 (FALANIYKSF…SIDESGFNKI (231 aa)) is the ABC transporter domain. ATP is bound at residue 40 to 47 (GKSGSGKS).

This sequence belongs to the ABC transporter superfamily. Lipoprotein translocase (TC 3.A.1.125) family. The complex is composed of two ATP-binding proteins (LolD) and two transmembrane proteins (LolC and LolE).

It is found in the cell inner membrane. Its function is as follows. Part of the ABC transporter complex LolCDE involved in the translocation of mature outer membrane-directed lipoproteins, from the inner membrane to the periplasmic chaperone, LolA. Responsible for the formation of the LolA-lipoprotein complex in an ATP-dependent manner. This Ehrlichia chaffeensis (strain ATCC CRL-10679 / Arkansas) protein is Lipoprotein-releasing system ATP-binding protein LolD.